The chain runs to 272 residues: Activator of basal transcription 1 (272 aa).

The residue at position 1 (M1) is an N-acetylmethionine. Basic and acidic residues predominate over residues 1 to 17 (MEAEESEKAATEQEPLK). Positions 1-38 (MEAEESEKAATEQEPLKGTEQTLDAEEEQEESEDAACG) are disordered. The segment covering 23–34 (LDAEEEQEESED) has biased composition (acidic residues). The 97-residue stretch at 46–142 (GIVYLGHIPP…RRRSPFRYDL (97 aa)) folds into the RRM domain. The stretch at 161 to 191 (AFERQVRRQRLRAEVAQAKRETDFYLQSVER) forms a coiled coil. A disordered region spans residues 197-272 (AADGDPARPD…MEGPSLVRDS (76 aa)).

It belongs to the ESF2/ABP1 family. As to quaternary structure, interacts with ESF1/ABTAP. Interacts with IGHMBP2.

The protein resides in the nucleus. It localises to the nucleolus. Functionally, could be a novel TATA-binding protein (TBP) which can function as a basal transcription activator. Can act as a regulator of basal transcription for class II genes. The protein is Activator of basal transcription 1 (ABT1) of Pongo abelii (Sumatran orangutan).